A 212-amino-acid polypeptide reads, in one-letter code: N-(5'-phosphoribosyl)anthranilate isomerase (212 aa).

Belongs to the TrpF family.

The enzyme catalyses N-(5-phospho-beta-D-ribosyl)anthranilate = 1-(2-carboxyphenylamino)-1-deoxy-D-ribulose 5-phosphate. The protein operates within amino-acid biosynthesis; L-tryptophan biosynthesis; L-tryptophan from chorismate: step 3/5. The sequence is that of N-(5'-phosphoribosyl)anthranilate isomerase from Cereibacter sphaeroides (strain ATCC 17029 / ATH 2.4.9) (Rhodobacter sphaeroides).